A 2422-amino-acid chain; its full sequence is Non-reducing polyketide synthase trt4 (2422 aa).

Positions 14 to 196 (VLFGPKCPKT…HHSDHTSVVQ (183 aa)) are N-terminal acylcarrier protein transacylase domain (SAT). The segment at 289–314 (VEPPDSHHNTNTTQDSDVTTNASPLT) is disordered. The span at 297–312 (NTNTTQDSDVTTNASP) shows a compositional bias: polar residues. In terms of domain architecture, Ketosynthase family 3 (KS3) spans 329 to 745 (TVPIAVTGMA…GSNAAIVLQE (417 aa)). Catalysis depends on for beta-ketoacyl synthase activity residues Cys-494, His-629, and His-668. Residues 856 to 1121 (LCFGGQTGNT…CPIDLSGPQA (266 aa)) are malonyl-CoA:ACP transacylase (MAT) domain. Ser-904 functions as the For acyl/malonyl transferase activity in the catalytic mechanism. The interval 1190–1316 (PSLVKLLNND…GKISISSEAN (127 aa)) is N-terminal hotdog fold. The PKS/mFAS DH domain occupies 1190 to 1495 (PSLVKLLNND…FTCVSIQSLK (306 aa)). The segment at 1191–1494 (SLVKLLNNDG…TFTCVSIQSL (304 aa)) is product template (PT) domain. His-1221 serves as the catalytic Proton acceptor; for dehydratase activity. The C-terminal hotdog fold stretch occupies residues 1345-1495 (SSGLKRSTVY…FTCVSIQSLK (151 aa)). The active-site Proton donor; for dehydratase activity is the Asp-1402. Positions 1535–1612 (SRSEDGLRVV…GLVQRIFPGG (78 aa)) constitute a Carrier domain. At Ser-1572 the chain carries O-(pantetheine 4'-phosphoryl)serine. A disordered region spans residues 1615–1636 (AHVETHSQPPDKIGITTGDRMP). The methyltransferase (CMeT) domain stretch occupies residues 1774–2007 (QHASEHKLLH…GFNWVDWTDN (234 aa)). The thioesterase (TE) domain stretch occupies residues 2036 to 2383 (NAVAEETLVY…LAPHIPTDEY (348 aa)). Catalysis depends on for thioesterase activity residues Ser-2159, Asp-2320, and His-2352.

It catalyses the reaction 3 malonyl-CoA + acetyl-CoA + 2 S-adenosyl-L-methionine = 3,5-dimethylorsellinate + 2 S-adenosyl-L-homocysteine + 3 CO2 + 4 CoA. Its pathway is secondary metabolite biosynthesis; terpenoid biosynthesis. Functionally, non-reducing polyketide synthase; part of the gene cluster that mediates the biosynthesis of terretonin, a fungal meroterpenoid that acts as a mycotoxin. The first step of the pathway is the synthesis of 3,5-dimethylorsellinic acid (DMOA) by the polyketide synthase trt4. DMOA is then prenylated into farnesyl-DMOA by the polyprenyl transferase trt2. Methylation by the methyltransferase trt5 then leads to farnesyl-DMOA methyl ester which is further subject to epoxidation by the FAD-dependent monooxygenase trt8 to yield epoxyfarnesyl-DMOA methyl ester. Cyclization of epoxyfarnesyl-DMOA methyl ester by the terpene cyclase trt1 leads to a tetracycle intermediate which is in turn converted to preterretonin. Dehydrogenase trt9 comes next to transform preterretonin to preterrenoid. The FAD-dependent monooxygenase trt3 is then required for the C-hydroxylation at C16 of preterrenoid to yield terrenoid. The cytochrome P450 trt6 catalyzes three successive oxidations to transform terrenoid into an unstable intermediate, which then undergoes the D-ring expansion and unusual rearrangement of the methoxy group to afford the core skeleton of terretonin. Trt14 catalyzes the D-ring expansion of terretonin involving intramolecular methoxy rearrangement as well as the hydrolysis of the expanded D-ring and the methyl ester moiety. Finally, the nonheme iron-dependent dioxygenase trt7 accomplishes the last two oxidation reactions steps to complete the biosynthesis of terretonin. Terretonin C is produced via spontaneous decarboxylation of the terretonin precursor. Another shunt product of the terretonin biosynthesis is dihydrofarnesyl-DMOA, derived from epoxyfarnesyl-DMOA through hydrolysis of the epoxide. The sequence is that of Non-reducing polyketide synthase trt4 from Aspergillus terreus (strain NIH 2624 / FGSC A1156).